The following is a 132-amino-acid chain: Intraflagellar transport protein 20 homolog A (132 aa).

The stretch at 87–112 (EAQQQQLYALIAEKKMQLERYRIEYD) forms a coiled coil.

The protein resides in the golgi apparatus. Its subcellular location is the cis-Golgi network. It localises to the cytoplasm. It is found in the cytoskeleton. The protein localises to the microtubule organizing center. The protein resides in the centrosome. Its subcellular location is the centriole. It localises to the cell projection. It is found in the cilium. Its function is as follows. Involved in ciliary process assembly. May play a role in the trafficking of ciliary membrane proteins from the Golgi complex to the cilium. Regulates the platelet-derived growth factor receptor-alpha (PDGFRA) signaling pathway. Plays an important role in spermatogenesis, particularly spermiogenesis, when germ cells form flagella. The chain is Intraflagellar transport protein 20 homolog A (ift20-a) from Xenopus laevis (African clawed frog).